A 516-amino-acid chain; its full sequence is uncharacterized protein (516 aa).

Positions 31–185 (ACIFLSKFDM…LDKFDIFEKF (155 aa)) constitute a uDENN domain. The region spanning 211–365 (HLVEYLPYWT…LEVYEKLILG (155 aa)) is the cDENN domain. Positions 367–513 (LQEDASTNAT…DISNLPECLG (147 aa)) constitute a dDENN domain. Residues Cys-511 and Cys-516 are each lipidated (S-palmitoyl cysteine).

Post-translationally, palmitoylated by AKR1.

The protein resides in the lipid droplet. Its function is as follows. May be involved in lipid metabolism. This is an uncharacterized protein from Saccharomyces cerevisiae (strain ATCC 204508 / S288c) (Baker's yeast).